Here is a 403-residue protein sequence, read N- to C-terminus: Imidazolonepropionase (403 aa).

2 residues coordinate Fe(3+): His-68 and His-70. Zn(2+) is bound by residues His-68 and His-70. 4-imidazolone-5-propanoate is bound by residues Arg-77, Tyr-140, and His-173. Residue Tyr-140 coordinates N-formimidoyl-L-glutamate. Fe(3+) is bound at residue His-238. Zn(2+) is bound at residue His-238. Gln-241 serves as a coordination point for 4-imidazolone-5-propanoate. Residue Asp-313 participates in Fe(3+) binding. Asp-313 is a binding site for Zn(2+). N-formimidoyl-L-glutamate-binding residues include Asn-315 and Gly-317. Thr-318 serves as a coordination point for 4-imidazolone-5-propanoate.

It belongs to the metallo-dependent hydrolases superfamily. HutI family. Requires Zn(2+) as cofactor. Fe(3+) is required as a cofactor.

The protein localises to the cytoplasm. The enzyme catalyses 4-imidazolone-5-propanoate + H2O = N-formimidoyl-L-glutamate. The protein operates within amino-acid degradation; L-histidine degradation into L-glutamate; N-formimidoyl-L-glutamate from L-histidine: step 3/3. Functionally, catalyzes the hydrolytic cleavage of the carbon-nitrogen bond in imidazolone-5-propanoate to yield N-formimidoyl-L-glutamate. It is the third step in the universal histidine degradation pathway. The chain is Imidazolonepropionase from Psychromonas ingrahamii (strain DSM 17664 / CCUG 51855 / 37).